The chain runs to 341 residues: Hygromycin-B 4-O-kinase (341 aa).

The Proton acceptor role is filled by Asp-198.

Belongs to the aminoglycoside phosphotransferase family.

The catalysed reaction is hygromycin B + ATP = 4-O-phosphohygromycin B + ADP + H(+). The aminoglycoside phosphotransferases achieve inactivation of their antibiotic substrates by phosphorylation. Only phosphorylates hygromycin and closely related compounds such as demethyl analogs and destomycin. The chain is Hygromycin-B 4-O-kinase (hph) from Escherichia coli.